Reading from the N-terminus, the 182-residue chain is Putative pre-16S rRNA nuclease (182 aa).

This sequence belongs to the YqgF nuclease family.

The protein localises to the cytoplasm. Its function is as follows. Could be a nuclease involved in processing of the 5'-end of pre-16S rRNA. The protein is Putative pre-16S rRNA nuclease of Corynebacterium glutamicum (strain ATCC 13032 / DSM 20300 / JCM 1318 / BCRC 11384 / CCUG 27702 / LMG 3730 / NBRC 12168 / NCIMB 10025 / NRRL B-2784 / 534).